The chain runs to 214 residues: Large ribosomal subunit protein uL3 (214 aa).

The interval 136 to 156 is disordered; sequence THGNSLSHRAPGSIGQNQTPG. Q153 is subject to N5-methylglutamine.

Belongs to the universal ribosomal protein uL3 family. As to quaternary structure, part of the 50S ribosomal subunit. Forms a cluster with proteins L14 and L19. Methylated by PrmB.

In terms of biological role, one of the primary rRNA binding proteins, it binds directly near the 3'-end of the 23S rRNA, where it nucleates assembly of the 50S subunit. The polypeptide is Large ribosomal subunit protein uL3 (Thioalkalivibrio sulfidiphilus (strain HL-EbGR7)).